A 290-amino-acid polypeptide reads, in one-letter code: 4-diphosphocytidyl-2-C-methyl-D-erythritol kinase (290 aa).

Lys-14 is an active-site residue. 103–113 contributes to the ATP binding site; the sequence is PMGGGLGGGSS. Residue Asp-145 is part of the active site.

Belongs to the GHMP kinase family. IspE subfamily. Homodimer.

It carries out the reaction 4-CDP-2-C-methyl-D-erythritol + ATP = 4-CDP-2-C-methyl-D-erythritol 2-phosphate + ADP + H(+). It participates in isoprenoid biosynthesis; isopentenyl diphosphate biosynthesis via DXP pathway; isopentenyl diphosphate from 1-deoxy-D-xylulose 5-phosphate: step 3/6. Functionally, catalyzes the phosphorylation of the position 2 hydroxy group of 4-diphosphocytidyl-2C-methyl-D-erythritol. The protein is 4-diphosphocytidyl-2-C-methyl-D-erythritol kinase of Pectobacterium carotovorum subsp. carotovorum (strain PC1).